Reading from the N-terminus, the 133-residue chain is Agouti-signaling protein (133 aa).

A signal peptide spans M1–S22. N39 carries an N-linked (GlcNAc...) asparagine glycan. The interval N56 to V95 is disordered. Residues K70–P79 show a composition bias toward basic residues. 5 cysteine pairs are disulfide-bonded: C94-C109, C101-C115, C108-C126, C112-C133, and C117-C124. Residues C94 to C133 form the Agouti domain.

The protein localises to the secreted. Functionally, involved in the regulation of melanogenesis. The binding of ASP to MC1R precludes alpha-MSH initiated signaling and thus blocks production of cAMP, leading to a down-regulation of eumelanogenesis (brown/black pigment) and thus increasing synthesis of pheomelanin (yellow/red pigment). The chain is Agouti-signaling protein (ASIP) from Bos taurus (Bovine).